The chain runs to 145 residues: Transcription antitermination protein NusB (145 aa).

This sequence belongs to the NusB family.

Involved in transcription antitermination. Required for transcription of ribosomal RNA (rRNA) genes. Binds specifically to the boxA antiterminator sequence of the ribosomal RNA (rrn) operons. The chain is Transcription antitermination protein NusB from Burkholderia ambifaria (strain MC40-6).